The sequence spans 720 residues: Casein kinase II subunit alpha'-interacting protein (720 aa).

Polar residues predominate over residues Leu-227 to Glu-249. 5 disordered regions span residues Leu-227 to Phe-250, Lys-264 to Leu-303, Gln-333 to Pro-366, Thr-602 to Thr-640, and Leu-678 to Lys-698. Residues Ser-608–Ser-626 are compositionally biased toward low complexity. Over residues Pro-630 to Thr-640 the composition is skewed to pro residues. Residues Lys-687–Lys-698 are compositionally biased toward basic residues.

Interacts (via C-terminus) with CSNK2A2. Post-translationally, phosphorylated by CK2 (casein kinase II), specifically by complexes containing catalytic subunit CSNK2A2. Expressed exclusively in testis (at protein level). Within testis, expressed mainly in the intermediate compartment of the seminiferous tubules with weaker expression in the basal and adluminal compartments.

It is found in the nucleus. Functionally, may play a role in chromatin regulation of male germ cells. The protein is Casein kinase II subunit alpha'-interacting protein of Mus musculus (Mouse).